The chain runs to 741 residues: Phosphoribosylformylglycinamidine synthase subunit PurL (741 aa).

The active site involves His53. Tyr56 and Lys95 together coordinate ATP. Glu97 is a binding site for Mg(2+). Substrate-binding positions include 98-101 and Arg120; that span reads SHNH. The active-site Proton acceptor is the His99. Position 121 (Asp121) interacts with Mg(2+). Gln244 contacts substrate. Asp274 lines the Mg(2+) pocket. 318 to 320 is a binding site for substrate; sequence ESQ. ATP-binding residues include Asp501 and Gly538. Asn539 provides a ligand contact to Mg(2+). Ser541 serves as a coordination point for substrate.

It belongs to the FGAMS family. In terms of assembly, monomer. Part of the FGAM synthase complex composed of 1 PurL, 1 PurQ and 2 PurS subunits.

It is found in the cytoplasm. It carries out the reaction N(2)-formyl-N(1)-(5-phospho-beta-D-ribosyl)glycinamide + L-glutamine + ATP + H2O = 2-formamido-N(1)-(5-O-phospho-beta-D-ribosyl)acetamidine + L-glutamate + ADP + phosphate + H(+). It participates in purine metabolism; IMP biosynthesis via de novo pathway; 5-amino-1-(5-phospho-D-ribosyl)imidazole from N(2)-formyl-N(1)-(5-phospho-D-ribosyl)glycinamide: step 1/2. Functionally, part of the phosphoribosylformylglycinamidine synthase complex involved in the purines biosynthetic pathway. Catalyzes the ATP-dependent conversion of formylglycinamide ribonucleotide (FGAR) and glutamine to yield formylglycinamidine ribonucleotide (FGAM) and glutamate. The FGAM synthase complex is composed of three subunits. PurQ produces an ammonia molecule by converting glutamine to glutamate. PurL transfers the ammonia molecule to FGAR to form FGAM in an ATP-dependent manner. PurS interacts with PurQ and PurL and is thought to assist in the transfer of the ammonia molecule from PurQ to PurL. This is Phosphoribosylformylglycinamidine synthase subunit PurL from Latilactobacillus sakei subsp. sakei (strain 23K) (Lactobacillus sakei subsp. sakei).